Here is a 333-residue protein sequence, read N- to C-terminus: Phosphate acyltransferase (333 aa).

The protein belongs to the PlsX family. Homodimer. Probably interacts with PlsY.

It localises to the cytoplasm. It catalyses the reaction a fatty acyl-[ACP] + phosphate = an acyl phosphate + holo-[ACP]. It participates in lipid metabolism; phospholipid metabolism. Catalyzes the reversible formation of acyl-phosphate (acyl-PO(4)) from acyl-[acyl-carrier-protein] (acyl-ACP). This enzyme utilizes acyl-ACP as fatty acyl donor, but not acyl-CoA. This is Phosphate acyltransferase from Clostridium botulinum (strain Alaska E43 / Type E3).